Here is a 311-residue protein sequence, read N- to C-terminus: F-box protein At3g18320 (311 aa).

An F-box domain is found at 1–46; it reads MTLPELPKDLVEEILCFVPATSLKRLRSTCKGWNRLFKDDKRFARK.

This is F-box protein At3g18320 from Arabidopsis thaliana (Mouse-ear cress).